The primary structure comprises 345 residues: Phosphoribosylformylglycinamidine cyclo-ligase (345 aa).

The protein belongs to the AIR synthase family.

It is found in the cytoplasm. It carries out the reaction 2-formamido-N(1)-(5-O-phospho-beta-D-ribosyl)acetamidine + ATP = 5-amino-1-(5-phospho-beta-D-ribosyl)imidazole + ADP + phosphate + H(+). The protein operates within purine metabolism; IMP biosynthesis via de novo pathway; 5-amino-1-(5-phospho-D-ribosyl)imidazole from N(2)-formyl-N(1)-(5-phospho-D-ribosyl)glycinamide: step 2/2. The polypeptide is Phosphoribosylformylglycinamidine cyclo-ligase (Aeromonas salmonicida (strain A449)).